Here is a 960-residue protein sequence, read N- to C-terminus: Mast/stem cell growth factor receptor Kit (960 aa).

The N-terminal stretch at 1–24 (MEGAHLAWELAHAVLLLSLIPAGG) is a signal peptide. Topologically, residues 25 to 511 (SVPHEESSLV…IRTHTLFTPL (487 aa)) are extracellular. 5 consecutive Ig-like C2-type domains span residues 27–102 (PHEE…VFVK), 111–194 (DSLI…LNVR), 201–294 (PVIT…LKAL), 303–396 (ATMN…VYVK), and 399–497 (PEIL…FNFA). Cystine bridges form between Cys-45–Cys-87, Cys-126–Cys-175, Cys-141–Cys-172, and Cys-222–Cys-276. Residues Asn-76, Asn-135, Asn-149, Asn-269, Asn-286, Asn-306, Asn-318, Asn-338, Asn-343, Asn-356, Asn-453, and Asn-469 are each glycosylated (N-linked (GlcNAc...) asparagine). Cys-414 and Cys-481 are joined by a disulfide. A helical transmembrane segment spans residues 512–532 (LIAFGVAAGLMCIIVMILVYI). Residues 533–960 (YLQKPKYEVQ…TQPLLVREDV (428 aa)) lie on the Cytoplasmic side of the membrane. Tyr-554 contributes to the Mg(2+) binding site. A phosphotyrosine; by autocatalysis mark is found at Tyr-554 and Tyr-556. Positions 575–913 (LSFGKTLGAG…QIVQLIEQQL (339 aa)) constitute a Protein kinase domain. ATP-binding positions include 582–589 (GAGAFGKV), Lys-609, and 657–663 (EYCCYGD). 2 positions are modified to phosphotyrosine; by autocatalysis: Tyr-689 and Tyr-706. The Proton acceptor role is filled by Asp-777. Arg-781 lines the ATP pocket. Residues Asn-782 and Asp-795 each contribute to the Mg(2+) site. A phosphotyrosine; by autocatalysis mark is found at Tyr-808 and Tyr-921.

It belongs to the protein kinase superfamily. Tyr protein kinase family. CSF-1/PDGF receptor subfamily. Post-translationally, ubiquitinated. KIT is rapidly ubiquitinated after autophosphorylation induced by KITLG/SCF binding, leading to internalization and degradation. In terms of processing, autophosphorylated on tyrosine residues. KITLG/SCF binding promotes autophosphorylation. Phosphorylated tyrosine residues are important for interaction with specific binding partners. In terms of tissue distribution, high in the brain and testes and also present in the bursa of Fabricus, heart, kidney, lung, spleen thymus and ovary.

Its subcellular location is the cell membrane. The enzyme catalyses L-tyrosyl-[protein] + ATP = O-phospho-L-tyrosyl-[protein] + ADP + H(+). Tyrosine-protein kinase that acts as a cell-surface receptor for the cytokine KITLG/SCF and plays an essential role in the regulation of cell survival and proliferation, hematopoiesis, stem cell maintenance, gametogenesis, mast cell development, migration and function, and in melanogenesis. In response to KITLG/SCF binding, KIT can activate several signaling pathways. Promotes phosphorylation of PIK3R1, the regulatory subunit of phosphatidylinositol 3-kinase, and subsequent activation of the kinase AKT1. Activated KIT also transmits signals via GRB2 and activation of RAS, RAF1 and the MAP kinases MAPK1/ERK2 and/or MAPK3/ERK1. Promotes activation of STAT family members STAT1, STAT3, STAT5A and STAT5B. KIT promotes activation of PLCG1, leading to the production of the cellular signaling molecules diacylglycerol and inositol 1,4,5-trisphosphate. KIT signaling is modulated by protein phosphatases, and by rapid internalization and degradation of the receptor. The chain is Mast/stem cell growth factor receptor Kit (KIT) from Gallus gallus (Chicken).